A 205-amino-acid polypeptide reads, in one-letter code: Putative 3-methyladenine DNA glycosylase (205 aa).

It belongs to the DNA glycosylase MPG family.

In Clostridium perfringens (strain 13 / Type A), this protein is Putative 3-methyladenine DNA glycosylase.